Reading from the N-terminus, the 421-residue chain is uncharacterized protein (421 aa).

The TRAM domain occupies 14–72 (DLTKGDTITVEVTRPAHGGEGIAHHGGRVIFVRGGFPGDDVDVEITQVKKRFARGFVVQ). Glutamine 250, tyrosine 286, glutamate 308, and aspartate 349 together coordinate S-adenosyl-L-methionine. Cysteine 376 acts as the Nucleophile in catalysis.

This sequence belongs to the class I-like SAM-binding methyltransferase superfamily. RNA M5U methyltransferase family.

This is an uncharacterized protein from Corynebacterium efficiens (strain DSM 44549 / YS-314 / AJ 12310 / JCM 11189 / NBRC 100395).